The sequence spans 657 residues: Hemocyanin (657 aa).

An N-linked (GlcNAc...) asparagine glycan is attached at Asn-167. Residues His-194, His-198, His-224, His-344, His-348, and His-384 each coordinate Cu cation. Intrachain disulfides connect Cys-483–Cys-502 and Cys-562–Cys-609.

This sequence belongs to the tyrosinase family. Hemocyanin subfamily. As to quaternary structure, it consists of at least four very similar subunits. Hemolymph.

It localises to the secreted. The protein localises to the extracellular space. Functionally, hemocyanins are copper-containing oxygen carriers occurring freely dissolved in the hemolymph of many mollusks and arthropods. This chain is Hemocyanin, found in Palinurus vulgaris (European spiny lobster).